The sequence spans 202 residues: 3-isopropylmalate dehydratase small subunit 1 (202 aa).

The protein belongs to the LeuD family. LeuD type 1 subfamily. As to quaternary structure, heterodimer of LeuC and LeuD.

It catalyses the reaction (2R,3S)-3-isopropylmalate = (2S)-2-isopropylmalate. The protein operates within amino-acid biosynthesis; L-leucine biosynthesis; L-leucine from 3-methyl-2-oxobutanoate: step 2/4. In terms of biological role, catalyzes the isomerization between 2-isopropylmalate and 3-isopropylmalate, via the formation of 2-isopropylmaleate. The chain is 3-isopropylmalate dehydratase small subunit 1 from Mannheimia succiniciproducens (strain KCTC 0769BP / MBEL55E).